The sequence spans 431 residues: 5-methylthioadenosine/S-adenosylhomocysteine deaminase (431 aa).

Residues His-66 and His-68 each contribute to the Zn(2+) site. Positions 95, 147, and 185 each coordinate substrate. Zn(2+) is bound at residue His-212. Residues Glu-215 and Asp-300 each contribute to the substrate site. Zn(2+) is bound at residue Asp-300.

It belongs to the metallo-dependent hydrolases superfamily. MTA/SAH deaminase family. It depends on Zn(2+) as a cofactor.

It carries out the reaction S-adenosyl-L-homocysteine + H2O + H(+) = S-inosyl-L-homocysteine + NH4(+). The enzyme catalyses S-methyl-5'-thioadenosine + H2O + H(+) = S-methyl-5'-thioinosine + NH4(+). Functionally, catalyzes the deamination of 5-methylthioadenosine and S-adenosyl-L-homocysteine into 5-methylthioinosine and S-inosyl-L-homocysteine, respectively. Is also able to deaminate adenosine. This chain is 5-methylthioadenosine/S-adenosylhomocysteine deaminase, found in Desulfitobacterium hafniense (strain Y51).